The sequence spans 365 residues: N5-carboxyaminoimidazole ribonucleotide synthase (365 aa).

ATP contacts are provided by residues R102, K143, 148-154 (GYDGKGQ), 177-180 (EEYV), E185, and 256-257 (NE). The 181-residue stretch at 106–286 (KLFYRQHNLP…QFEQHLRAII (181 aa)) folds into the ATP-grasp domain.

The protein belongs to the PurK/PurT family. In terms of assembly, homodimer.

It carries out the reaction 5-amino-1-(5-phospho-beta-D-ribosyl)imidazole + hydrogencarbonate + ATP = 5-carboxyamino-1-(5-phospho-D-ribosyl)imidazole + ADP + phosphate + 2 H(+). It participates in purine metabolism; IMP biosynthesis via de novo pathway; 5-amino-1-(5-phospho-D-ribosyl)imidazole-4-carboxylate from 5-amino-1-(5-phospho-D-ribosyl)imidazole (N5-CAIR route): step 1/2. In terms of biological role, catalyzes the ATP-dependent conversion of 5-aminoimidazole ribonucleotide (AIR) and HCO(3)(-) to N5-carboxyaminoimidazole ribonucleotide (N5-CAIR). In Saccharolobus solfataricus (strain ATCC 35092 / DSM 1617 / JCM 11322 / P2) (Sulfolobus solfataricus), this protein is N5-carboxyaminoimidazole ribonucleotide synthase.